The sequence spans 192 residues: NF-kappa-B inhibitor-interacting Ras-like protein 1 (192 aa).

11–18 (GLLSVGKT) contacts GTP. An Effector region motif is present at residues 35–43 (DCETMEDVY). The interactions with NFKBIA and NFKBIB stretch occupies residues 58–93 (HLYDTRGLQEGVELPKHYFSFADGFVLVYSVNNLES). GTP is bound by residues 61–65 (DTRGL) and 120–123 (NKID). A disordered region spans residues 168 to 192 (LSQPQSKSSFPLPGRKNKGNSNSEN).

It belongs to the small GTPase superfamily. Ras family. KappaB-Ras subfamily. In terms of assembly, interacts with both NF-kappa-B inhibitor alpha (NFKBIA) and beta (NFKBIB) in vitro. However, it probably only interacts with NFKBIB in vivo. Forms a complex with NFKBIB and NF-kappa-B heterodimer (p50/NFKB1 and p65/RELA). Also interacts with c-Rel (REL). As to expression, widely expressed.

It localises to the cytoplasm. Functionally, atypical Ras-like protein that acts as a potent regulator of NF-kappa-B activity by preventing the degradation of NF-kappa-B inhibitor beta (NFKBIB) by most signals, explaining why NFKBIB is more resistant to degradation. May act by blocking phosphorylation of NFKBIB and mediating cytoplasmic retention of p65/RELA NF-kappa-B subunit. It is unclear whether it acts as a GTPase. Both GTP- and GDP-bound forms block phosphorylation of NFKBIB. The chain is NF-kappa-B inhibitor-interacting Ras-like protein 1 (NKIRAS1) from Homo sapiens (Human).